Reading from the N-terminus, the 544-residue chain is MAVDTEKDSVQAGSPMETPGSPVDETTEPVVTSKTWIVSMILSCGYGLSFWPIPVVSAIGTMISADMGDPTGYIWTLCKETNPIIGMDYLDHLCFLDLVCFIGHIVVASAKSTNQVIAGLVVSGFGGANCQMAAFALPELLPNKWRHIGVVIADLTVYIAVIIAPVTARYGYELGTWAWNFWGVAIFQGLSFFGLLFLYHPPKHPLGIPYKEAFKSLDYLGAFLFIGGAVPFLMGIVWAGVYDSNDVHVVAPLVVGAAVLVCFALWESFGKLKYPLTPTYVFASSWGRDFTAPVIALGVVNMFYYSSSILWPQMITVFYTNGGADWKYSVILSLPQGFAIFFGAMLLTCFGSKLRHWHWQLTGSVFVMVVFGSLLGIVTPTNKGTMIAFIFLSQAGFGWALYLSIAITQMGVEHKNLGVSGGISGCIRFAAGAVATSIYQTVYSNSLAKYTAIYVPSAAISAGLPESKVTDLMAVVSQGAAAMKSYSPAVVAAAEAALSQAYCKAIFVVAMVSMAFGILGLAACLCCKDVDSKMTNKPTIIRRD.

The interval 1–28 (MAVDTEKDSVQAGSPMETPGSPVDETTE) is disordered. Helical transmembrane passes span 36-56 (WIVS…IPVV), 90-110 (LDHL…VASA), 116-136 (VIAG…AAFA), 148-168 (IGVV…PVTA), 178-198 (AWNF…LLFL), 221-241 (GAFL…WAGV), 249-269 (VVAP…WESF), 290-310 (FTAP…SSIL), 330-350 (VILS…LTCF), 361-381 (LTGS…VTPT), 387-407 (IAFI…SIAI), 418-438 (GVSG…ATSI), and 505-525 (AIFV…AACL).

The protein belongs to the major facilitator superfamily.

The protein resides in the cell membrane. Its function is as follows. MFS-type transporter; part of the gene cluster that mediates the biosynthesis of PR-toxin, a bicyclic sesquiterpene belonging to the eremophilane class and acting as a mycotoxin. The protein is MFS-type transporter prx5 of Penicillium rubens (strain ATCC 28089 / DSM 1075 / NRRL 1951 / Wisconsin 54-1255) (Penicillium chrysogenum).